The following is a 378-amino-acid chain: Carbamoyl phosphate synthase small chain (378 aa).

Positions 1–188 (MSILKEAYLY…THFAYGTSPN (188 aa)) are CPSase. L-glutamine-binding residues include Ser49, Gly244, and Gly246. The 187-residue stretch at 192–378 (KVVAIDFGAK…FEEFAKLCCK (187 aa)) folds into the Glutamine amidotransferase type-1 domain. The active-site Nucleophile is the Cys272. Positions 273, 276, 314, and 317 each coordinate L-glutamine. Catalysis depends on residues His355 and Glu357.

Belongs to the CarA family. In terms of assembly, composed of two chains; the small (or glutamine) chain promotes the hydrolysis of glutamine to ammonia, which is used by the large (or ammonia) chain to synthesize carbamoyl phosphate. Tetramer of heterodimers (alpha,beta)4.

It carries out the reaction hydrogencarbonate + L-glutamine + 2 ATP + H2O = carbamoyl phosphate + L-glutamate + 2 ADP + phosphate + 2 H(+). It catalyses the reaction L-glutamine + H2O = L-glutamate + NH4(+). It functions in the pathway amino-acid biosynthesis; L-arginine biosynthesis; carbamoyl phosphate from bicarbonate: step 1/1. Its pathway is pyrimidine metabolism; UMP biosynthesis via de novo pathway; (S)-dihydroorotate from bicarbonate: step 1/3. Its function is as follows. Small subunit of the glutamine-dependent carbamoyl phosphate synthetase (CPSase). CPSase catalyzes the formation of carbamoyl phosphate from the ammonia moiety of glutamine, carbonate, and phosphate donated by ATP, constituting the first step of 2 biosynthetic pathways, one leading to arginine and/or urea and the other to pyrimidine nucleotides. The small subunit (glutamine amidotransferase) binds and cleaves glutamine to supply the large subunit with the substrate ammonia. The chain is Carbamoyl phosphate synthase small chain from Helicobacter hepaticus (strain ATCC 51449 / 3B1).